A 176-amino-acid polypeptide reads, in one-letter code: 3-hydroxydecanoyl-[acyl-carrier-protein] dehydratase (176 aa).

His71 is a catalytic residue.

Belongs to the thioester dehydratase family. FabA subfamily. Homodimer.

It localises to the cytoplasm. The catalysed reaction is a (3R)-hydroxyacyl-[ACP] = a (2E)-enoyl-[ACP] + H2O. The enzyme catalyses (3R)-hydroxydecanoyl-[ACP] = (2E)-decenoyl-[ACP] + H2O. It catalyses the reaction (2E)-decenoyl-[ACP] = (3Z)-decenoyl-[ACP]. Its pathway is lipid metabolism; fatty acid biosynthesis. In terms of biological role, necessary for the introduction of cis unsaturation into fatty acids. Catalyzes the dehydration of (3R)-3-hydroxydecanoyl-ACP to E-(2)-decenoyl-ACP and then its isomerization to Z-(3)-decenoyl-ACP. Can catalyze the dehydratase reaction for beta-hydroxyacyl-ACPs with saturated chain lengths up to 16:0, being most active on intermediate chain length. This Rhodopseudomonas palustris (strain BisA53) protein is 3-hydroxydecanoyl-[acyl-carrier-protein] dehydratase.